The primary structure comprises 232 residues: Cytidylate kinase (232 aa).

10–18 lines the ATP pocket; it reads GPAASGKST.

It belongs to the cytidylate kinase family. Type 1 subfamily.

It is found in the cytoplasm. It carries out the reaction CMP + ATP = CDP + ADP. It catalyses the reaction dCMP + ATP = dCDP + ADP. This Phytoplasma mali (strain AT) protein is Cytidylate kinase.